We begin with the raw amino-acid sequence, 116 residues long: Ribosome-binding factor A (116 aa).

This sequence belongs to the RbfA family. In terms of assembly, monomer. Binds 30S ribosomal subunits, but not 50S ribosomal subunits or 70S ribosomes.

It is found in the cytoplasm. In terms of biological role, one of several proteins that assist in the late maturation steps of the functional core of the 30S ribosomal subunit. Associates with free 30S ribosomal subunits (but not with 30S subunits that are part of 70S ribosomes or polysomes). Required for efficient processing of 16S rRNA. May interact with the 5'-terminal helix region of 16S rRNA. The sequence is that of Ribosome-binding factor A from Clostridium botulinum (strain Alaska E43 / Type E3).